The primary structure comprises 308 residues: Putative cathepsin L 3 (308 aa).

A signal peptide spans 1–21; it reads MKQFLTAAIVTLLMTAGYYHL. Positions 22–110 are cleaved as a propeptide — activation peptide; it reads QEDDTNDFER…GASLPEVQLE (89 aa). Cystine bridges form between cysteine 129-cysteine 170 and cysteine 254-cysteine 298. Residues histidine 261 and asparagine 278 contribute to the active site.

Belongs to the peptidase C1 family.

It is found in the secreted. The enzyme catalyses Specificity close to that of papain. As compared to cathepsin B, cathepsin L exhibits higher activity toward protein substrates, but has little activity on Z-Arg-Arg-NHMec, and no peptidyl-dipeptidase activity.. Its function is as follows. May be involved in extracellular digestion. The sequence is that of Putative cathepsin L 3 from Paramecium tetraurelia.